The chain runs to 2710 residues: Serine/threonine-protein kinase ATR (2710 aa).

The 611-residue stretch at 1647-2257 folds into the FAT domain; it reads TLAKASFRCQ…LWMMAAVSKS (611 aa). A PI3K/PI4K catalytic domain is found at 2368–2680; it reads IADDAEILNS…GVNAAPSLPL (313 aa). The interval 2374-2380 is G-loop; it reads ILNSLQK. Residues 2545 to 2553 form a catalytic loop region; that stretch reads GLGDRHGEN. An activation loop region spans residues 2565-2589; that stretch reads HVDFSCLFDKGLLLEKPEVVPFRFT. An FATC domain is found at 2678-2710; the sequence is LPLSVEGQARRLIAEAVSHSNLGKMYVWWMAWF.

Belongs to the PI3/PI4-kinase family. ATM subfamily.

The protein localises to the nucleus. It carries out the reaction L-seryl-[protein] + ATP = O-phospho-L-seryl-[protein] + ADP + H(+). The catalysed reaction is L-threonyl-[protein] + ATP = O-phospho-L-threonyl-[protein] + ADP + H(+). In terms of biological role, probable serine/threonine kinase. Seems to play a central role in cell-cycle regulation by transmitting DNA damage signals to downstream effectors of cell-cycle progression. May recognize the substrate consensus sequence [ST]-Q and phosphorylate histone variant H2AX to form H2AXS139ph at sites of DNA damage, thereby regulating DNA damage response mechanism. The protein is Serine/threonine-protein kinase ATR of Oryza sativa subsp. japonica (Rice).